We begin with the raw amino-acid sequence, 370 residues long: 4-hydroxy-3-methylbut-2-en-1-yl diphosphate synthase (flavodoxin) (370 aa).

4 residues coordinate [4Fe-4S] cluster: Cys265, Cys268, Cys300, and Glu307.

This sequence belongs to the IspG family. Requires [4Fe-4S] cluster as cofactor.

It carries out the reaction (2E)-4-hydroxy-3-methylbut-2-enyl diphosphate + oxidized [flavodoxin] + H2O + 2 H(+) = 2-C-methyl-D-erythritol 2,4-cyclic diphosphate + reduced [flavodoxin]. Its pathway is isoprenoid biosynthesis; isopentenyl diphosphate biosynthesis via DXP pathway; isopentenyl diphosphate from 1-deoxy-D-xylulose 5-phosphate: step 5/6. In terms of biological role, converts 2C-methyl-D-erythritol 2,4-cyclodiphosphate (ME-2,4cPP) into 1-hydroxy-2-methyl-2-(E)-butenyl 4-diphosphate. The sequence is that of 4-hydroxy-3-methylbut-2-en-1-yl diphosphate synthase (flavodoxin) from Symbiobacterium thermophilum (strain DSM 24528 / JCM 14929 / IAM 14863 / T).